The primary structure comprises 497 residues: uncharacterized protein (497 aa).

The segment covering 1 to 16 has biased composition (polar residues); the sequence is MSTTTETVTWSQYKPQ. The disordered stretch occupies residues 1–29; the sequence is MSTTTETVTWSQYKPQETQRRLSRSSTIT. Ser-64 is modified (phosphoserine). The next 6 helical transmembrane spans lie at 86–106, 120–140, 155–175, 180–200, 222–242, and 258–278; these read IALV…ALPI, FSGL…YPML, FRPL…YSLA, WLYL…MFLY, LNIL…GILA, and AGSW…SIFF. Position 295 is a phosphoserine (Ser-295). The next 6 helical transmembrane spans lie at 309–329, 348–368, 377–397, 407–427, 443–463, and 468–488; these read FMLC…AGYQ, GNFL…STFL, IMLY…VLDA, FVLY…LVSL, VVQV…GAIF, and VGFI…LLYL.

Its subcellular location is the membrane. This is an uncharacterized protein from Schizosaccharomyces pombe (strain 972 / ATCC 24843) (Fission yeast).